A 416-amino-acid polypeptide reads, in one-letter code: Isocitrate dehydrogenase [NADP] (416 aa).

Residues 77-79 (TIT) and R84 contribute to the NADP(+) site. Residue T79 coordinates substrate. Substrate is bound by residues 96-102 (SPNGTIR), R111, and R134. Residue D254 coordinates Mn(2+). K262 is a binding site for NADP(+). A Mn(2+)-binding site is contributed by D277. NADP(+)-binding positions include 312–317 (GTVTRH) and N330.

This sequence belongs to the isocitrate and isopropylmalate dehydrogenases family. As to quaternary structure, heterodimer. The cofactor is Mg(2+). It depends on Mn(2+) as a cofactor.

It is found in the cytoplasm. It catalyses the reaction D-threo-isocitrate + NADP(+) = 2-oxoglutarate + CO2 + NADPH. Its function is as follows. May supply 2-oxoglutarate for amino acid biosynthesis and ammonia assimilation via the glutamine synthetase/glutamate synthase (GS/GOGAT) pathway. The sequence is that of Isocitrate dehydrogenase [NADP] (ICDH-1) from Solanum tuberosum (Potato).